We begin with the raw amino-acid sequence, 1388 residues long: DNA-directed RNA polymerase subunit beta (1388 aa).

This sequence belongs to the RNA polymerase beta chain family. In terms of assembly, the RNAP catalytic core consists of 2 alpha, 1 beta, 1 beta' and 1 omega subunit. When a sigma factor is associated with the core the holoenzyme is formed, which can initiate transcription.

It catalyses the reaction RNA(n) + a ribonucleoside 5'-triphosphate = RNA(n+1) + diphosphate. In terms of biological role, DNA-dependent RNA polymerase catalyzes the transcription of DNA into RNA using the four ribonucleoside triphosphates as substrates. The chain is DNA-directed RNA polymerase subunit beta from Stenotrophomonas maltophilia (strain K279a).